Consider the following 265-residue polypeptide: Type III pantothenate kinase (265 aa).

An ATP-binding site is contributed by 17–24; that stretch reads DIGNTSIS. 114–117 contacts substrate; that stretch reads GSDV. The active-site Proton acceptor is Asp116. Residue Asp137 coordinates K(+). Thr140 lines the ATP pocket. Thr192 contributes to the substrate binding site.

This sequence belongs to the type III pantothenate kinase family. Homodimer. It depends on NH4(+) as a cofactor. K(+) is required as a cofactor.

It localises to the cytoplasm. The enzyme catalyses (R)-pantothenate + ATP = (R)-4'-phosphopantothenate + ADP + H(+). The protein operates within cofactor biosynthesis; coenzyme A biosynthesis; CoA from (R)-pantothenate: step 1/5. Its function is as follows. Catalyzes the phosphorylation of pantothenate (Pan), the first step in CoA biosynthesis. The polypeptide is Type III pantothenate kinase (Borrelia hermsii (strain HS1 / DAH)).